We begin with the raw amino-acid sequence, 1214 residues long: BOS complex subunit NOMO1 (1214 aa).

A signal peptide spans 1-23; the sequence is MRAGRCAAALLLLLLSGAGRAIG. The Extracellular portion of the chain corresponds to 24-1150; it reads SEDIVVGCGG…RKLPEQDIAQ (1127 aa). Asn42, Asn210, and Asn610 each carry an N-linked (GlcNAc...) asparagine glycan. Positions 692–720 form a coiled coil; it reads KSAQELRREQQLAEIETRRQEREKNGKEE. Positions 708–726 are enriched in basic and acidic residues; the sequence is TRRQEREKNGKEEGEEGRA. The segment at 708-733 is disordered; the sequence is TRRQEREKNGKEEGEEGRARPPGQEM. The helical transmembrane segment at 1151–1167 threads the bilayer; the sequence is GSYIALPLTLLLLLAGY. Over 1168–1214 the chain is Cytoplasmic; sequence NHDKLIPLLLQLTSRLQGVRALGQAASDSSGPEDMKRQTKKQKTRRT. The disordered stretch occupies residues 1190-1214; the sequence is GQAASDSSGPEDMKRQTKKQKTRRT. Residues Ser1196 and Ser1197 each carry the phosphoserine modification. Over residues 1205 to 1214 the composition is skewed to basic residues; the sequence is QTKKQKTRRT.

In terms of assembly, component of the back of Sec61 (BOS) complex, composed of NCLN/Nicalin, NOMO (NOMO1, NOMO2 or NOMO3) and TMEM147. The BOS complex is part of the multi-pass translocon (MPT) complex, composed of three subcomplexes, the GEL complex (composed of RAB5IF/OPTI and TMCO1), the BOS complex (composed of NCLN/Nicalin, NOMO and TMEM147) and the PAT complex (composed of WDR83OS/Asterix and CCDC47). The MPT complex associates with the SEC61 complex.

It localises to the endoplasmic reticulum membrane. In terms of biological role, component of the multi-pass translocon (MPT) complex that mediates insertion of multi-pass membrane proteins into the lipid bilayer of membranes. The MPT complex takes over after the SEC61 complex: following membrane insertion of the first few transmembrane segments of proteins by the SEC61 complex, the MPT complex occludes the lateral gate of the SEC61 complex to promote insertion of subsequent transmembrane regions. In Mus musculus (Mouse), this protein is BOS complex subunit NOMO1.